A 1371-amino-acid chain; its full sequence is Major capsid protein (1371 aa).

The protein belongs to the herpesviridae major capsid protein family. Homomultimer. Makes the hexons and eleven out of twelve pentons. Interacts with triplex proteins 1/TRX1 and 2/TRX2; adjacent capsomers are linked together in groups of three by triplexes, heterotrimeric complexes composed of one molecule of TRX1 and two molecules of TRX2. Interacts with scaffold protein; this interaction allows efficient MCP transport to the host nucleus. Interacts with capsid vertex component 2/CVC2. Interacts with the small capsomere-interacting protein/SCP.

It is found in the virion. It localises to the host nucleus. In terms of biological role, self-assembles to form an icosahedral capsid with a T=16 symmetry, about 200 nm in diameter, and consisting of 150 hexons and 12 pentons (total of 162 capsomers). Hexons form the edges and faces of the capsid and are each composed of six MCP molecules. In contrast, one penton is found at each of the 12 vertices. Eleven of the pentons are MCP pentamers, while the last vertex is occupied by the portal complex. The capsid is surrounded by a layer of proteinaceous material designated the tegument which, in turn, is enclosed in an envelope of host cell-derived lipids containing virus-encoded glycoproteins. The protein is Major capsid protein of Saimiriine herpesvirus 2 (strain 11) (SaHV-2).